A 388-amino-acid chain; its full sequence is tRNA (guanine(26)-N(2))-dimethyltransferase (388 aa).

The 380-residue stretch at 4–383 (KTIVEGTTKV…APITEIKEII (380 aa)) folds into the Trm1 methyltransferase domain. The S-adenosyl-L-methionine site is built by Arg-41, Arg-78, Asp-94, and Ala-123. Zn(2+)-binding residues include Cys-251, Cys-254, Cys-271, and Cys-274.

Belongs to the class I-like SAM-binding methyltransferase superfamily. Trm1 family.

It carries out the reaction guanosine(26) in tRNA + 2 S-adenosyl-L-methionine = N(2)-dimethylguanosine(26) in tRNA + 2 S-adenosyl-L-homocysteine + 2 H(+). In terms of biological role, dimethylates a single guanine residue at position 26 of a number of tRNAs using S-adenosyl-L-methionine as donor of the methyl groups. The protein is tRNA (guanine(26)-N(2))-dimethyltransferase of Methanosarcina barkeri (strain Fusaro / DSM 804).